Reading from the N-terminus, the 20-residue chain is Large ribosomal subunit protein bL33 (20 aa).

The protein belongs to the bacterial ribosomal protein bL33 family.

The protein is Large ribosomal subunit protein bL33 (rpmG) of Brevundimonas vesicularis (Pseudomonas vesicularis).